A 482-amino-acid chain; its full sequence is Bile acid receptor (482 aa).

Lysine 132 is covalently cross-linked (Glycyl lysine isopeptide (Lys-Gly) (interchain with G-Cter in SUMO1)). The nuclear receptor DNA-binding region spans 134-209 (DELCVVCGDR…MGMLAECLLT (76 aa)). Residues 137–157 (CVVCGDRASGYHYNALTCEGC) form an NR C4-type zinc finger. Phosphoserine; by PKC/PRKCA is present on residues serine 145 and serine 164. At lysine 167 the chain carries N6-acetyllysine; by EP300. The segment at 173 to 197 (CKNGGNCVMDMYMRRKCQECRLRKC) adopts an NR C4-type zinc-finger fold. Lysine 216 bears the N6-methyllysine; by SETD7 mark. An N6-acetyllysine; by EP300 modification is found at lysine 223. A compositionally biased stretch (basic and acidic residues) spans 229–240 (AIHEDSEGRDLR). The disordered stretch occupies residues 229 to 253 (AIHEDSEGRDLRQVTSTTKSCREKT). The NR LBD domain maps to 258-482 (DQQNLLHYIM…PLLCEIWDVQ (225 aa)). Lysine 285 participates in a covalent cross-link: Glycyl lysine isopeptide (Lys-Gly) (interchain with G-Cter in SUMO1). Residues arginine 341, tyrosine 371, and tyrosine 379 each contribute to the chenodeoxycholate site. Threonine 452 bears the Phosphothreonine; by PKC/PRKCZ mark. Histidine 457 lines the chenodeoxycholate pocket.

This sequence belongs to the nuclear hormone receptor family. NR1 subfamily. As to quaternary structure, heterodimer with RXRA; the heterodimerization enhances the binding affinity for LXXLL motifs from coactivators. Binds DNA predominantly as a heterodimer with RXRA. After activation by agonist binding interacts with coactivators. Interacts with NCOA1, NCOA2, PPARGC1A, CARM1, SETD7, PRMT1, GPS2, SMARCA4 and MED1, EP300 and SMARCD1. Interacts with XRCC5 and XRCC6; decreasing NR1H4/FXR transactivation activity towards ABCB11/BSEP. Interacts with PAGR1 AND NCOA6; indicative for an association with an MLL2/MLL3 complex (ASCOM). Post-translationally, acetylated by EP300. Lys-223 as is the major acetylation site for EP300; the dynamicly regulated acetylation inhibits heterodimerization with RXRA and transactivation activity. Deacetylated by SIRT1. Methylation may increase transactivation of target genes. In terms of processing, phosphorylation by PKC/PRKCA increases transactivation activity by promoting association with PPARGC1A. Post-translationally, sumoylated upon ligand binding.

The protein resides in the nucleus. In terms of biological role, ligand-activated transcription factor. Receptor for bile acids (BAs) such as chenodeoxycholic acid (CDCA), lithocholic acid, deoxycholic acid (DCA) and allocholic acid (ACA). Plays a essential role in BA homeostasis through the regulation of genes involved in BA synthesis, conjugation and enterohepatic circulation. Also regulates lipid and glucose homeostasis and is involved innate immune response. The FXR-RXR heterodimer binds predominantly to farnesoid X receptor response elements (FXREs) containing two inverted repeats of the consensus sequence 5'-AGGTCA-3' in which the monomers are spaced by 1 nucleotide (IR-1) but also to tandem repeat DR1 sites with lower affinity, and can be activated by either FXR or RXR-specific ligands. It is proposed that monomeric nuclear receptors such as NR5A2/LRH-1 bound to coregulatory nuclear responsive element (NRE) halfsites located in close proximity to FXREs modulate transcriptional activity. In the liver activates transcription of the corepressor NR0B2 thereby indirectly inhibiting CYP7A1 and CYP8B1 (involved in BA synthesis) implicating at least in part histone demethylase KDM1A resulting in epigenomic repression, and SLC10A1/NTCP (involved in hepatic uptake of conjugated BAs). Activates transcription of the repressor MAFG (involved in regulation of BA synthesis). Activates transcription of SLC27A5/BACS and BAAT (involved in BA conjugation), ABCB11/BSEP (involved in bile salt export) by directly recruiting histone methyltransferase CARM1, and ABCC2/MRP2 (involved in secretion of conjugated BAs) and ABCB4 (involved in secretion of phosphatidylcholine in the small intestine). Activates transcription of SLC27A5/BACS and BAAT (involved in BA conjugation), ABCB11/BSEP (involved in bile salt export) by directly recruiting histone methyltransferase CARM1, and ABCC2/MRP2 (involved in secretion of conjugated BAs) and ABCB4 (involved in secretion of phosphatidylcholine in the small intestine). In the intestine activates FGF19 expression and secretion leading to hepatic CYP7A1 repression. The function also involves the coordinated induction of hepatic KLB/beta-klotho expression. Regulates transcription of liver UGT2B4 and SULT2A1 involved in BA detoxification; binding to the UGT2B4 promoter seems to imply a monomeric transactivation independent of RXRA. Modulates lipid homeostasis by activating liver NR0B2/SHP-mediated repression of SREBF1 (involved in de novo lipogenesis), expression of PLTP (involved in HDL formation), SCARB1 (involved in HDL hepatic uptake), APOE, APOC1, APOC4, PPARA (involved in beta-oxidation of fatty acids), VLDLR and SDC1 (involved in the hepatic uptake of LDL and IDL remnants), and inhibiting expression of MTTP (involved in VLDL assembly). Increases expression of APOC2 (promoting lipoprotein lipase activity implicated in triglyceride clearance). Transrepresses APOA1 involving a monomeric competition with NR2A1 for binding to a DR1 element. Also reduces triglyceride clearance by inhibiting expression of ANGPTL3 and APOC3 (both involved in inhibition of lipoprotein lipase). Involved in glucose homeostasis by modulating hepatic gluconeogenesis through activation of NR0B2/SHP-mediated repression of respective genes. Modulates glycogen synthesis (inducing phosphorylation of glycogen synthase kinase-3). Modulates glucose-stimulated insulin secretion and is involved in insulin resistance. Involved in intestinal innate immunity. Plays a role in protecting the distal small intestine against bacterial overgrowth and preservation of the epithelial barrier. Down-regulates inflammatory cytokine expression in several types of immune cells including macrophages and mononuclear cells. Mediates trans-repression of TLR4-induced cytokine expression; the function seems to require its sumoylation and prevents N-CoR nuclear receptor corepressor clearance from target genes such as IL1B and NOS2. Involved in the TLR9-mediated protective mechanism in intestinal inflammation. Plays an anti-inflammatory role in liver inflammation; proposed to inhibit pro-inflammatory (but not antiapoptotic) NF-kappa-B signaling. This Bos taurus (Bovine) protein is Bile acid receptor (NR1H4).